Reading from the N-terminus, the 466-residue chain is Ribulose bisphosphate carboxylase large chain (466 aa).

Lys5 is subject to N6,N6,N6-trimethyllysine. The substrate site is built by Asn114 and Thr164. The active-site Proton acceptor is Lys166. Lys168 lines the substrate pocket. Residues Lys192, Asp194, and Glu195 each contribute to the Mg(2+) site. Lys192 bears the N6-carboxylysine mark. The active-site Proton acceptor is the His285. Arg286, His318, and Ser370 together coordinate substrate.

This sequence belongs to the RuBisCO large chain family. Type I subfamily. As to quaternary structure, heterohexadecamer of 8 large chains and 8 small chains; disulfide-linked. The disulfide link is formed within the large subunit homodimers. Mg(2+) is required as a cofactor. Post-translationally, the disulfide bond which can form in the large chain dimeric partners within the hexadecamer appears to be associated with oxidative stress and protein turnover.

It localises to the plastid. The protein resides in the chloroplast. It catalyses the reaction 2 (2R)-3-phosphoglycerate + 2 H(+) = D-ribulose 1,5-bisphosphate + CO2 + H2O. It carries out the reaction D-ribulose 1,5-bisphosphate + O2 = 2-phosphoglycolate + (2R)-3-phosphoglycerate + 2 H(+). Its function is as follows. RuBisCO catalyzes two reactions: the carboxylation of D-ribulose 1,5-bisphosphate, the primary event in carbon dioxide fixation, as well as the oxidative fragmentation of the pentose substrate in the photorespiration process. Both reactions occur simultaneously and in competition at the same active site. The sequence is that of Ribulose bisphosphate carboxylase large chain from Moringa oleifera (Horseradish tree).